Reading from the N-terminus, the 230-residue chain is Triggering receptor expressed on myeloid cells 1 (230 aa).

The N-terminal stretch at 1 to 20 (MRKAGLWGLLCVFFVSEVKA) is a signal peptide. An Ig-like V-type domain is found at 21-124 (AIVLEEERYD…IYHPPNDPVV (104 aa)). The Extracellular portion of the chain corresponds to 21–202 (AIVLEEERYD…TDADSVSTSS (182 aa)). C41 and C113 form a disulfide bridge. N191 is a glycosylation site (N-linked (GlcNAc...) asparagine). The chain crosses the membrane as a helical span at residues 203–223 (VTISVICGLLSKSLVFIILFI). At 224 to 230 (VTKRTFG) the chain is on the cytoplasmic side.

In terms of assembly, monomer. Homomultimer; when activated. Interacts with TYROBP/DAP12. Interacts with TLR4.

It is found in the cell membrane. In terms of biological role, cell surface receptor that plays important roles in innate and adaptive immunity by amplifying inflammatory responses. Upon activation by various ligands such as PGLYRP1, HMGB1 or HSP70, multimerizes and forms a complex with transmembrane adapter TYROBP/DAP12. In turn, initiates a SYK-mediated cascade of tyrosine phosphorylation, activating multiple downstream mediators such as BTK, MAPK1, MAPK3 or phospholipase C-gamma. This cascade promotes the neutrophil- and macrophage-mediated release of pro-inflammatory cytokines and/or chemokines, as well as their migration and thereby amplifies inflammatory responses that are triggered by bacterial and fungal infections. By also promoting the amplification of inflammatory signals that are initially triggered by Toll-like receptor (TLR) and NOD-like receptor engagement, plays a major role in the pathophysiology of acute and chronic inflammatory diseases of different etiologies including septic shock and atherosclerosis. In Mus musculus (Mouse), this protein is Triggering receptor expressed on myeloid cells 1 (Trem1).